Consider the following 513-residue polypeptide: Maturase K (513 aa).

It belongs to the intron maturase 2 family. MatK subfamily.

The protein localises to the plastid. It is found in the chloroplast. Usually encoded in the trnK tRNA gene intron. Probably assists in splicing its own and other chloroplast group II introns. In Cyrilla racemiflora (Swamp titi), this protein is Maturase K.